Reading from the N-terminus, the 906-residue chain is MRSSEDREDSELLPANRPRSPSRSSYDSDDSGLSVDSILEEQKYNAATNETLGLPQEMRYHDEEGGEAGSNEALHTKASSSRSRRLLWLVVLLCCGGWVVAFVLFITQGRADYRTATDELQSDNSGSFSDGTSSGKPLTLQQVLSGVFLPRGHAISWVAGPDGEDGLLIERGEDDEAGYLRINDIRQDGKVNRVLMQKPTVGVDGRTIKPSATRPSPDLKKVLIISNQEKNWRHSFTASYWIFDVETQTAEPLDPNNIDGRVQLALWSPKSDAIAFVRDNNLYLRKLSSERVVPITKDGGEQLFYGVPDWVYEEEVFSGNSVTWWSEDGSQIAFIRTNESAVPEFPVQYFLSRPSGKKPQPGLENYPEVREIKYPKAGAPNPFVNLQFYDVEQGEVFSVDTPDDFDDDDRLIIEVIWAAKGKVLVRTTNRESDILKVFLVDTESRESKLIRIQDISELDGGWVEPTQSVRFIPADPDKGRPFDGYLDTVVHEGYDHLAYFTPLDNPEPIMLTSGEWEVVDAPTAVDLTRGLVYFIATKEAPTERHLYRVRLDGSDLTPLTDTSQPGYYSVSFSDGAGYALLSYQGPSIPWQSIISTEGEKTTTLRIIEDNTDLSKLVAQYALPTENYQNITIDGFTLQVVERRPPHFNPARKYPVLFHLYGGPGSQTVDRRFNVDFQSYVAASLGYIVVTVDGRGTGFIGRAARCIIRGNIGHYEAIDQIATAKNWAQKPYVDESRMAIWGWSYGGFMTLKTLEQDAGETFQYGMAVAPVTDWRFYDSVYTERYMHTPQHNPTGYDNTSISDMAALHNNVRFLVIHGASDDNVHIQNTLTLIDKLDLASVQNYDVHFYPDSDHSIFFHNAHTMVYERLASWLVNAFNGEWHRTANPVPDESMLRRLAKRVWPGFAH.

The span at 1-11 (MRSSEDREDSE) shows a compositional bias: acidic residues. Positions 1 to 33 (MRSSEDREDSELLPANRPRSPSRSSYDSDDSGL) are disordered. The Cytoplasmic segment spans residues 1 to 85 (MRSSEDREDS…TKASSSRSRR (85 aa)). Low complexity predominate over residues 21–33 (PSRSSYDSDDSGL). A helical; Signal-anchor for type II membrane protein membrane pass occupies residues 86–106 (LLWLVVLLCCGGWVVAFVLFI). Residues 107-906 (TQGRADYRTA…AKRVWPGFAH (800 aa)) are Vacuolar-facing. N338 and N629 each carry an N-linked (GlcNAc...) asparagine glycan. S743 serves as the catalytic Charge relay system. N-linked (GlcNAc...) asparagine glycosylation is present at N797. Catalysis depends on charge relay system residues D820 and H853.

This sequence belongs to the peptidase S9B family.

The protein resides in the vacuole membrane. The enzyme catalyses Release of an N-terminal dipeptide, Xaa-Yaa-|-Zaa-, from a polypeptide, preferentially when Yaa is Pro, provided Zaa is neither Pro nor hydroxyproline.. In terms of biological role, type IV dipeptidyl-peptidase which removes N-terminal dipeptides sequentially from polypeptides having unsubstituted N-termini provided that the penultimate residue is proline. In Emericella nidulans (strain FGSC A4 / ATCC 38163 / CBS 112.46 / NRRL 194 / M139) (Aspergillus nidulans), this protein is Probable dipeptidyl-aminopeptidase B (dapB).